Reading from the N-terminus, the 193-residue chain is MDPKEKEKMAEELNVEETKDTAEEQPQDDQAEEAAPLTHEEQLEKELEDAQAVIEEQKDKYLRLSAEFDNYRKRTMKEKAELILNGGEKSISSILPVIDDFERAIKTMETAKDVKAVKEGVELIYNKFMAVMAQNGVKVIETKDQPLDTDYHEAIAVIPAPSEEQKGKILDCVQTGYTLNDKVIRHAKVVVGE.

Residues 1 to 22 (MDPKEKEKMAEELNVEETKDTA) show a composition bias toward basic and acidic residues. A disordered region spans residues 1 to 45 (MDPKEKEKMAEELNVEETKDTAEEQPQDDQAEEAAPLTHEEQLEK). The segment covering 23 to 32 (EEQPQDDQAE) has biased composition (acidic residues).

This sequence belongs to the GrpE family. In terms of assembly, homodimer.

It localises to the cytoplasm. Participates actively in the response to hyperosmotic and heat shock by preventing the aggregation of stress-denatured proteins, in association with DnaK and GrpE. It is the nucleotide exchange factor for DnaK and may function as a thermosensor. Unfolded proteins bind initially to DnaJ; upon interaction with the DnaJ-bound protein, DnaK hydrolyzes its bound ATP, resulting in the formation of a stable complex. GrpE releases ADP from DnaK; ATP binding to DnaK triggers the release of the substrate protein, thus completing the reaction cycle. Several rounds of ATP-dependent interactions between DnaJ, DnaK and GrpE are required for fully efficient folding. In Bacteroides thetaiotaomicron (strain ATCC 29148 / DSM 2079 / JCM 5827 / CCUG 10774 / NCTC 10582 / VPI-5482 / E50), this protein is Protein GrpE.